The sequence spans 424 residues: Serine hydroxymethyltransferase (424 aa).

(6S)-5,6,7,8-tetrahydrofolate contacts are provided by residues Leu119 and 123–125; that span reads GHL. Lys228 is subject to N6-(pyridoxal phosphate)lysine. (6S)-5,6,7,8-tetrahydrofolate is bound at residue 353–355; sequence SAF.

Belongs to the SHMT family. Homodimer. It depends on pyridoxal 5'-phosphate as a cofactor.

It localises to the cytoplasm. The catalysed reaction is (6R)-5,10-methylene-5,6,7,8-tetrahydrofolate + glycine + H2O = (6S)-5,6,7,8-tetrahydrofolate + L-serine. It functions in the pathway one-carbon metabolism; tetrahydrofolate interconversion. The protein operates within amino-acid biosynthesis; glycine biosynthesis; glycine from L-serine: step 1/1. In terms of biological role, catalyzes the reversible interconversion of serine and glycine with tetrahydrofolate (THF) serving as the one-carbon carrier. Also exhibits THF-independent aldolase activity toward beta-hydroxyamino acids, producing glycine and aldehydes, via a retro-aldol mechanism. The sequence is that of Serine hydroxymethyltransferase from Natronomonas pharaonis (strain ATCC 35678 / DSM 2160 / CIP 103997 / JCM 8858 / NBRC 14720 / NCIMB 2260 / Gabara) (Halobacterium pharaonis).